Consider the following 192-residue polypeptide: A-type ATP synthase subunit E (192 aa).

This sequence belongs to the V-ATPase E subunit family. Has multiple subunits with at least A(3), B(3), C, D, E, F, H, I and proteolipid K(x).

It localises to the cell membrane. In terms of biological role, component of the A-type ATP synthase that produces ATP from ADP in the presence of a proton gradient across the membrane. The protein is A-type ATP synthase subunit E of Methanoculleus marisnigri (strain ATCC 35101 / DSM 1498 / JR1).